Consider the following 434-residue polypeptide: Double-stranded RNA-binding protein 2 (434 aa).

2 DRBM domains span residues 1–70 and 87–155; these read MYKN…ALSN and VYKN…SLKQ. Residues 402–434 form a disordered region; it reads EKTASKETERAEFKDSSKGEPETARERLENLKI.

Heterodimer with DRB1 or DRB5. Interacts with DCL1 and DCL5.

It localises to the cytoplasm. In terms of biological role, binds double-stranded RNA. May be involved in RNA-mediated silencing. The chain is Double-stranded RNA-binding protein 2 (DRB2) from Arabidopsis thaliana (Mouse-ear cress).